The following is a 190-amino-acid chain: Potassium-transporting ATPase KdpC subunit (190 aa).

A helical transmembrane segment spans residues 13–33 (VGFLLLTLVCGVVYPGIVTII).

This sequence belongs to the KdpC family. The system is composed of three essential subunits: KdpA, KdpB and KdpC.

Its subcellular location is the cell membrane. Part of the high-affinity ATP-driven potassium transport (or Kdp) system, which catalyzes the hydrolysis of ATP coupled with the electrogenic transport of potassium into the cytoplasm. This subunit acts as a catalytic chaperone that increases the ATP-binding affinity of the ATP-hydrolyzing subunit KdpB by the formation of a transient KdpB/KdpC/ATP ternary complex. This Listeria welshimeri serovar 6b (strain ATCC 35897 / DSM 20650 / CCUG 15529 / CIP 8149 / NCTC 11857 / SLCC 5334 / V8) protein is Potassium-transporting ATPase KdpC subunit.